The following is a 122-amino-acid chain: MKKRALPIVIFVISLQQSSQSFAVLDLLDQLFHKILNLSSRSISCSNCLKHRLQIPYFCSLHKGLNTVHKFRSLRTFQQCHELSKSNQKCHLSVMTRQVLRSRIMRALPLIKESLLLAQFLQ.

A signal peptide spans 1-21 (MKKRALPIVIFVISLQQSSQS). The short motif at 72-75 (RSLR) is the RxLR element.

This sequence belongs to the RxLR effector family.

Its subcellular location is the secreted. The protein resides in the host endoplasmic reticulum membrane. Its function is as follows. Secreted effector that dos not suppress the host cell death induced by cell death-inducing proteins. In Plasmopara viticola (Downy mildew of grapevine), this protein is Secreted RxLR effector protein 80.